Reading from the N-terminus, the 311-residue chain is tRNA dimethylallyltransferase (311 aa).

Residue 12 to 19 (GPTASGKT) participates in ATP binding. 14 to 19 (TASGKT) is a binding site for substrate. Interaction with substrate tRNA stretches follow at residues 37–40 (DSAM) and 161–165 (QRIQR).

Belongs to the IPP transferase family. In terms of assembly, monomer. Mg(2+) serves as cofactor.

The enzyme catalyses adenosine(37) in tRNA + dimethylallyl diphosphate = N(6)-dimethylallyladenosine(37) in tRNA + diphosphate. In terms of biological role, catalyzes the transfer of a dimethylallyl group onto the adenine at position 37 in tRNAs that read codons beginning with uridine, leading to the formation of N6-(dimethylallyl)adenosine (i(6)A). The chain is tRNA dimethylallyltransferase from Coxiella burnetii (strain Dugway 5J108-111).